The sequence spans 121 residues: Holo-[acyl-carrier-protein] synthase (121 aa).

Residues Asp-6 and Glu-55 each coordinate Mg(2+).

This sequence belongs to the P-Pant transferase superfamily. AcpS family. Mg(2+) serves as cofactor.

Its subcellular location is the cytoplasm. It catalyses the reaction apo-[ACP] + CoA = holo-[ACP] + adenosine 3',5'-bisphosphate + H(+). Transfers the 4'-phosphopantetheine moiety from coenzyme A to a Ser of acyl-carrier-protein. The protein is Holo-[acyl-carrier-protein] synthase of Chloroherpeton thalassium (strain ATCC 35110 / GB-78).